The chain runs to 143 residues: Putative acyl carrier protein phosphodiesterase (143 aa).

This sequence belongs to the AcpH family.

The enzyme catalyses holo-[ACP] + H2O = apo-[ACP] + (R)-4'-phosphopantetheine + H(+). Converts holo-ACP to apo-ACP by hydrolytic cleavage of the phosphopantetheine prosthetic group from ACP. The chain is Putative acyl carrier protein phosphodiesterase (acpH) from Shigella flexneri.